We begin with the raw amino-acid sequence, 145 residues long: Aminoglycoside N(6')-acetyltransferase type 1 (145 aa).

In terms of domain architecture, N-acetyltransferase spans 1-145 (MDIRQMNRTH…ERVIFYRKRC (145 aa)). Substrate is bound by residues W22, H25, Y66, and E79. Acetyl-CoA is bound by residues 81–83 (IFV) and 89–94 (QRGVAK). D115 contributes to the substrate binding site. N120 is an acetyl-CoA binding site. E136 contacts substrate.

Homodimer.

It carries out the reaction kanamycin B + acetyl-CoA = N(6')-acetylkanamycin B + CoA + H(+). Its function is as follows. Catalyzes the transfer of an acetyl group from acetyl-CoA to the 6'-amino group of aminoglycoside molecules conferring resistance to antibiotics containing the purpurosamine ring. The sequence is that of Aminoglycoside N(6')-acetyltransferase type 1 from Salmonella typhimurium (strain LT2 / SGSC1412 / ATCC 700720).